The primary structure comprises 133 residues: Putative pre-16S rRNA nuclease (133 aa).

The protein belongs to the YqgF nuclease family.

The protein resides in the cytoplasm. Its function is as follows. Could be a nuclease involved in processing of the 5'-end of pre-16S rRNA. In Alcanivorax borkumensis (strain ATCC 700651 / DSM 11573 / NCIMB 13689 / SK2), this protein is Putative pre-16S rRNA nuclease.